Here is a 459-residue protein sequence, read N- to C-terminus: NADP-specific glutamate dehydrogenase (459 aa).

K114 is a catalytic residue.

Belongs to the Glu/Leu/Phe/Val dehydrogenases family. As to quaternary structure, homohexamer.

The catalysed reaction is L-glutamate + NADP(+) + H2O = 2-oxoglutarate + NH4(+) + NADPH + H(+). In Emericella nidulans (strain FGSC A4 / ATCC 38163 / CBS 112.46 / NRRL 194 / M139) (Aspergillus nidulans), this protein is NADP-specific glutamate dehydrogenase (gdhA).